Consider the following 234-residue polypeptide: Leucyl/phenylalanyl-tRNA--protein transferase (234 aa).

The protein belongs to the L/F-transferase family.

The protein localises to the cytoplasm. It catalyses the reaction N-terminal L-lysyl-[protein] + L-leucyl-tRNA(Leu) = N-terminal L-leucyl-L-lysyl-[protein] + tRNA(Leu) + H(+). The enzyme catalyses N-terminal L-arginyl-[protein] + L-leucyl-tRNA(Leu) = N-terminal L-leucyl-L-arginyl-[protein] + tRNA(Leu) + H(+). The catalysed reaction is L-phenylalanyl-tRNA(Phe) + an N-terminal L-alpha-aminoacyl-[protein] = an N-terminal L-phenylalanyl-L-alpha-aminoacyl-[protein] + tRNA(Phe). Its function is as follows. Functions in the N-end rule pathway of protein degradation where it conjugates Leu, Phe and, less efficiently, Met from aminoacyl-tRNAs to the N-termini of proteins containing an N-terminal arginine or lysine. In Nitrosomonas eutropha (strain DSM 101675 / C91 / Nm57), this protein is Leucyl/phenylalanyl-tRNA--protein transferase.